The chain runs to 281 residues: Ribosomal protein L11 methyltransferase (281 aa).

S-adenosyl-L-methionine is bound by residues threonine 133, glycine 154, aspartate 175, and asparagine 216.

This sequence belongs to the methyltransferase superfamily. PrmA family.

The protein resides in the cytoplasm. It catalyses the reaction L-lysyl-[protein] + 3 S-adenosyl-L-methionine = N(6),N(6),N(6)-trimethyl-L-lysyl-[protein] + 3 S-adenosyl-L-homocysteine + 3 H(+). Its function is as follows. Methylates ribosomal protein L11. In Campylobacter jejuni subsp. jejuni serotype O:2 (strain ATCC 700819 / NCTC 11168), this protein is Ribosomal protein L11 methyltransferase.